Consider the following 89-residue polypeptide: MATSAAVKEEPATQFAKDQLKAIIERIERLEEEKKTISDDIRDVYAEAKGNGYDVKALRTIVRMRKQDANERAEQETILETYMQALGML.

Belongs to the UPF0335 family.

This Rhodopseudomonas palustris (strain BisB18) protein is UPF0335 protein RPC_3979.